Reading from the N-terminus, the 276-residue chain is 2-dehydro-3-deoxyphosphooctonate aldolase (276 aa).

It belongs to the KdsA family.

It is found in the cytoplasm. The catalysed reaction is D-arabinose 5-phosphate + phosphoenolpyruvate + H2O = 3-deoxy-alpha-D-manno-2-octulosonate-8-phosphate + phosphate. The protein operates within carbohydrate biosynthesis; 3-deoxy-D-manno-octulosonate biosynthesis; 3-deoxy-D-manno-octulosonate from D-ribulose 5-phosphate: step 2/3. It participates in bacterial outer membrane biogenesis; lipopolysaccharide biosynthesis. The polypeptide is 2-dehydro-3-deoxyphosphooctonate aldolase (Xylella fastidiosa (strain 9a5c)).